The primary structure comprises 90 residues: DNA-directed RNA polymerase subunit omega (90 aa).

It belongs to the RNA polymerase subunit omega family. As to quaternary structure, the RNAP catalytic core consists of 2 alpha, 1 beta, 1 beta' and 1 omega subunit. When a sigma factor is associated with the core the holoenzyme is formed, which can initiate transcription.

The catalysed reaction is RNA(n) + a ribonucleoside 5'-triphosphate = RNA(n+1) + diphosphate. Its function is as follows. Promotes RNA polymerase assembly. Latches the N- and C-terminal regions of the beta' subunit thereby facilitating its interaction with the beta and alpha subunits. The sequence is that of DNA-directed RNA polymerase subunit omega from Histophilus somni (strain 129Pt) (Haemophilus somnus).